The following is a 154-amino-acid chain: Iron sulfur cluster assembly protein 1, mitochondrial (154 aa).

This sequence belongs to the NifU family. In terms of assembly, component of the core Fe-S cluster (ISC) assembly machinery. Requires [2Fe-2S] cluster as cofactor.

It localises to the mitochondrion matrix. The protein operates within cofactor biosynthesis; iron-sulfur cluster biosynthesis. Scaffold protein for the de novo synthesis of iron-sulfur (Fe-S) clusters within mitochondria, which is required for maturation of both mitochondrial and cytoplasmic [2Fe-2S] and [4Fe-4S] proteins. First, a [2Fe-2S] cluster is transiently assembled on the scaffold protein ISU1. In a second step, the cluster is released from ISU1, transferred to a glutaredoxin, followed by the formation of mitochondrial [2Fe-2S] proteins, the synthesis of [4Fe-4S] clusters and their target-specific insertion into the recipient apoproteins. Cluster assembly on ISU1 depends on the function of the cysteine desulfurase complex NFS1-ISD11, which serves as the sulfur donor for cluster synthesis, the iron-binding protein frataxin as the putative iron donor, and the electron transfer chain comprised of ferredoxin reductase and ferredoxin, which receive their electrons from NADH. This Eremothecium gossypii (strain ATCC 10895 / CBS 109.51 / FGSC 9923 / NRRL Y-1056) (Yeast) protein is Iron sulfur cluster assembly protein 1, mitochondrial (ISU1).